Reading from the N-terminus, the 335-residue chain is MGKQRVLSGVQPTGNLHLGNYLGAIRNWVEIQDQYDNFFCVVDLHAITVPHNPATLAADTYAIAALYLACGIDLKYSNIFVQSHVSAHSELAWFLNCITPLNWLQDMIQFKEKAVKQGENVGAGLLIYPVLMAADILLYQADKVPVGEDQKQHLELTRDIVNRFNHQFAKDKPVMKLPEPLIRKEGARVMSLTDGTRKMSKSDPSELSRINLLDPPDQIANKIKRCKTDPVKGLTFDDPERPECNNLLTLYMLLSGKKKEEVAAECQDMGWGQFKPLFTETAINALKPIQEKYQEITADKGYLESVLRDGREKAETVANQTLADVKAALGYSAPV.

Residues 11 to 13 (QPT) and 19 to 20 (GN) contribute to the ATP site. The short motif at 12 to 20 (PTGNLHLGN) is the 'HIGH' region element. Aspartate 135 contributes to the L-tryptophan binding site. ATP-binding positions include 147–149 (GED), valine 189, and 198–202 (KMSKS). A 'KMSKS' region motif is present at residues 198 to 202 (KMSKS).

The protein belongs to the class-I aminoacyl-tRNA synthetase family. As to quaternary structure, homodimer.

The protein resides in the cytoplasm. It catalyses the reaction tRNA(Trp) + L-tryptophan + ATP = L-tryptophyl-tRNA(Trp) + AMP + diphosphate + H(+). Functionally, catalyzes the attachment of tryptophan to tRNA(Trp). The protein is Tryptophan--tRNA ligase of Nostoc sp. (strain PCC 7120 / SAG 25.82 / UTEX 2576).